The sequence spans 435 residues: Enolase (435 aa).

Gln163 is a binding site for (2R)-2-phosphoglycerate. Glu205 functions as the Proton donor in the catalytic mechanism. The Mg(2+) site is built by Asp243, Glu292, and Asp319. Positions 344, 373, 374, and 395 each coordinate (2R)-2-phosphoglycerate. Lys344 serves as the catalytic Proton acceptor.

It belongs to the enolase family. Mg(2+) is required as a cofactor.

It is found in the cytoplasm. Its subcellular location is the secreted. The protein resides in the cell surface. The catalysed reaction is (2R)-2-phosphoglycerate = phosphoenolpyruvate + H2O. It participates in carbohydrate degradation; glycolysis; pyruvate from D-glyceraldehyde 3-phosphate: step 4/5. Its function is as follows. Catalyzes the reversible conversion of 2-phosphoglycerate (2-PG) into phosphoenolpyruvate (PEP). It is essential for the degradation of carbohydrates via glycolysis. The polypeptide is Enolase (Streptococcus equi subsp. zooepidemicus (strain MGCS10565)).